A 481-amino-acid polypeptide reads, in one-letter code: MSIFNMITSYAGSQLLPFYIAIFVFTLVPWAIRFSWLELRKGSVVPLANPPDSLFGTGKTRRSFVKLSREILAKARSLFPNEPFRLITDWDFADEIRNDPRLSFSKAAMQDNHAGIPGFETVALVGREDQLIQKVARKQLTKHLYIIARISSRIYLGDQLCRNEAWLKITKTYTTNFYTASTNLRMFPRSIRPLAHWFLPECRKLRQERKDAIGIITPLIERRRELRRAAIAAGQPLPVFHDAIDWSEQEAEAAGTGASFDPVIFQLTLSLLAIHTTYDLLQQTMIDLGRHPEYIEPLRQEVVQLLREEGWKKTTLFKMKLLDSAIKESQRMKPGSIVTMRRYVTEDITLSSGLTLKKGTRLNVDNRRLDDPKIYDNPEVYNPYRFYDMRSEAGKDHGAQLVSTGSNHMGFGHGQHSCPGRFFAANEIKVALCHILVKYDWKLCPDTETKPDTRGMIAKSSPVTDILIKRRESVELDLEAI.

A helical transmembrane segment spans residues 12–32 (GSQLLPFYIAIFVFTLVPWAI). A heme-binding site is contributed by Cys-418.

The protein belongs to the cytochrome P450 family. It depends on heme as a cofactor.

It localises to the membrane. It participates in plant hormone biosynthesis; gibberellin biosynthesis. Its function is as follows. Gibberellin 20-oxidase; part of the gene cluster that mediates the biosynthesis of gibberellins (GAs), diterpenoids that may provide a selective advantage during infection of the preferred host plant, rice. Gibberellins (GAs) are diterpenoids and are synthesized via the mevalonate pathway. Biosynthesis of the major metabolite GA3 (gibberellic acid) from geranylgeranyl diphosphate (GGPP) requires 13 steps. The GGPP produced by the geranylgeranyl diphosphate synthase GGS2 is converted to ent-kaurene via ent-copalyldiphosphate in a two-step cyclization reaction performed by the bifunctional ent-copalyl diphosphate synthase/ent-kaurene synthase enzyme (CPS/KS). Ent-Kaurene is metabolized to GAs by a series of oxidation reactions catalyzed by cytochrome P450 monooxygenases. Cytochrome P450 monooxygenase P450-4 is an ent-kaurene oxidase that catalyzes the three oxidation steps between ent-kaurene and ent-kaurenoic acid. The highly multifunctional cytochrome P450 monooxygenase P450-1 then catalyzes four steps involving oxidation at two carbon atoms, in the main pathway from ent-kaurenoic acid to GA14 via GA12-aldehyde as well as producing kaurenolides and fujenoic acids as by-products. The cytochrome P450 monooxygenase P450-2 then converts GA14 to GA4 by removal of C-20. GA4 is further converted to GA7 by the GA4 desaturase DES via 1,2-desaturation before cytochrome P450 monooxygenase P450-3, a 13-hydroxylase, hydroxylates GA7 to GA3, the final product of the GA-biosynthetic pathway. The chain is Cytochrome P450 monooygenase 2 from Gibberella fujikuroi (strain CBS 195.34 / IMI 58289 / NRRL A-6831) (Bakanae and foot rot disease fungus).